Here is a 204-residue protein sequence, read N- to C-terminus: Phosphoribosyl-dephospho-CoA transferase (204 aa).

Active-site residues include Asp129 and Asp131.

It belongs to the MdcG family.

The catalysed reaction is apo-[malonate decarboxylase ACP] + 2'-(5''-triphospho-alpha-D-ribosyl)-3'-dephospho-CoA = holo-[malonate decarboxylase ACP] + diphosphate. Its function is as follows. Transfers 2'-(5-triphosphoribosyl)-3'-dephosphocoenzyme-A to the apo-[acyl-carrier-protein] of the malonate decarboxylase to yield holo-[acyl-carrier-protein]. This chain is Phosphoribosyl-dephospho-CoA transferase, found in Pseudomonas putida (Arthrobacter siderocapsulatus).